The sequence spans 228 residues: Non-fluorescent flavoprotein (228 aa).

Belongs to the bacterial luciferase oxidoreductase family. In terms of assembly, homodimer. The cofactor is FMN.

The sequence is that of Non-fluorescent flavoprotein (luxF) from Photobacterium leiognathi.